Reading from the N-terminus, the 150-residue chain is Detocs response regulatory protein DtcB (150 aa).

Positions 2-150 (KILIADDNIQ…TDLIKKITEL (149 aa)) constitute a Response regulatory domain. Position 54 is a 4-aspartylphosphate (Asp-54).

Post-translationally, probably phosphorylated by DtcA.

Possible phosphate scavenger member of the two-component regulatory system Detocs that confers resistance to bacteriophage. When the system (DtcA-DtcB-DtcC) is expressed in a susceptible E.coli (strain MG1655) it confers resistance to bacteriophages T2, T4, T5, T7, SECphi4, SECphi6 and SECphi27; the level of resistance varies, resistance to T2, T7 and SECphi4 is not very high. DtcA probably autophosphorylates upon sensing viral infection, and subsequently transfers the phosphate signal to DtcC which activates it, leading to an antiviral defense; DtcB (this subunit) may scavenge phosphorylation signals from accidental activation of DtcA. In Enterobacter cloacae (strain JD6301), this protein is Detocs response regulatory protein DtcB.